A 192-amino-acid polypeptide reads, in one-letter code: E3 ubiquitin-protein ligase RNF183 (192 aa).

Residues 1 to 161 are Cytoplasmic-facing; sequence MAEQQGRELE…RECFRNPQFR (161 aa). Residues 13 to 60 form an RING-type zinc finger; sequence CPVCWNPFNNTFHTPKMLDCCHSFCVECLAHLSLVTPARRRLLCPLCR. The helical; Anchor for type IV membrane protein transmembrane segment at 162-182 threads the bilayer; it reads IFAYLMAVILSVTLLLIFSIF. Residues 183–192 are Lumenal-facing; sequence WTKQFLWGVG.

In terms of assembly, interacts with FATE1. Interacts with SEC16A. Interacts with BCL2L1. Autoubiquitinated (in vitro). In terms of tissue distribution, kidney and testis.

The protein resides in the endoplasmic reticulum membrane. It localises to the endoplasmic reticulum. Its subcellular location is the golgi apparatus. The protein localises to the cis-Golgi network membrane. It is found in the lysosome membrane. The catalysed reaction is S-ubiquitinyl-[E2 ubiquitin-conjugating enzyme]-L-cysteine + [acceptor protein]-L-lysine = [E2 ubiquitin-conjugating enzyme]-L-cysteine + N(6)-ubiquitinyl-[acceptor protein]-L-lysine.. It functions in the pathway protein modification; protein ubiquitination. In terms of biological role, acts as an E3 ubiquitin ligase catalyzing the covalent attachment of ubiquitin moieties onto substrate proteins. Triggers apoptosis in response to prolonged ER stress by mediating the polyubiquitination and subsequent proteasomal degradation of BCL2L1. May collaborate with FATE1 to restrain BIK protein levels thus regulating apoptotic signaling. This Homo sapiens (Human) protein is E3 ubiquitin-protein ligase RNF183 (RNF183).